The following is a 179-amino-acid chain: Natural killer cells antigen CD94 (179 aa).

At 1-10 (MAVFKTTLWR) the chain is on the cytoplasmic side. A helical; Signal-anchor for type II membrane protein membrane pass occupies residues 11–31 (LISGTLGIICLSLMSTLGILL). Over 32-179 (KNSFTKLSIE…NRYICKQQLI (148 aa)) the chain is Extracellular. Intrachain disulfides connect C58–C70 and C61–C72. Positions 68-175 (YRCNCYFISS…CEDKNRYICK (108 aa)) constitute a C-type lectin domain. N83 and N132 each carry an N-linked (GlcNAc...) asparagine glycan. 2 cysteine pairs are disulfide-bonded: C89/C174 and C152/C166.

In terms of assembly, can form disulfide-bonded heterodimer with NKG2 family members KLRC1 and KLRC2. KLRD1-KLRC1 heterodimer interacts with peptide-bound HLA-E-B2M heterotrimeric complex. KLRD1 plays a prominent role in directly interacting with HLA-E. KLRD1-KLRC1 interacts with much higher affinity with peptide-bound HLA-E-B2M than KLRD1-KLRC2. Interacts with the adapter protein TYROBP/DAP12; this interaction is required for cell surface expression and cell activation. As to expression, expressed in NK cell subsets (at protein level). Expressed in memory/effector CD8-positive alpha-beta T cell subsets (at protein level). Expressed in melanoma-specific cytotoxic T cell clones (at protein level). Expressed in terminally differentiated cytotoxic gamma-delta T cells (at protein level). KLRD1-KLRC1 and KLRD1-KLRC2 are differentially expressed in NK and T cell populations, with only minor subsets expressing both receptor complexes (at protein level).

It localises to the cell membrane. Immune receptor involved in self-nonself discrimination. In complex with KLRC1 or KLRC2 on cytotoxic and regulatory lymphocyte subsets, recognizes non-classical major histocompatibility (MHC) class Ib molecule HLA-E loaded with self-peptides derived from the signal sequence of classical MHC class Ia and non-classical MHC class Ib molecules. Enables cytotoxic cells to monitor the expression of MHC class I molecules in healthy cells and to tolerate self. Primarily functions as a ligand binding subunit as it lacks the capacity to signal. In terms of biological role, KLRD1-KLRC1 acts as an immune inhibitory receptor. Key inhibitory receptor on natural killer (NK) cells that regulates their activation and effector functions. Dominantly counteracts T cell receptor signaling on a subset of memory/effector CD8-positive T cells as part of an antigen-driven response to avoid autoimmunity. On intraepithelial CD8-positive gamma-delta regulatory T cells triggers TGFB1 secretion, which in turn limits the cytotoxic programming of intraepithelial CD8-positive alpha-beta T cells, distinguishing harmless from pathogenic antigens. In HLA-E-rich tumor microenvironment, acts as an immune inhibitory checkpoint and may contribute to progressive loss of effector functions of NK cells and tumor-specific T cells, a state known as cell exhaustion. Upon HLA-E-peptide binding, transmits intracellular signals through KLRC1 immunoreceptor tyrosine-based inhibition motifs (ITIMs) by recruiting INPP5D/SHIP-1 and INPPL1/SHIP-2 tyrosine phosphatases to ITIMs, and ultimately opposing signals transmitted by activating receptors through dephosphorylation of proximal signaling molecules. Functionally, KLRD1-KLRC2 acts as an immune activating receptor. On cytotoxic lymphocyte subsets recognizes HLA-E loaded with signal sequence-derived peptides from non-classical MHC class Ib HLA-G molecules, likely playing a role in the generation and effector functions of adaptive NK cells and in maternal-fetal tolerance during pregnancy. Regulates the effector functions of terminally differentiated cytotoxic lymphocyte subsets, and in particular may play a role in adaptive NK cell response to viral infection. Upon HLA-E-peptide binding, transmits intracellular signals via the adapter protein TYROBP/DAP12, triggering the phosphorylation of proximal signaling molecules and cell activation. Its function is as follows. (Microbial infection) Viruses like human cytomegalovirus have evolved an escape mechanism whereby virus-induced down-regulation of host MHC class I molecules is coupled to the binding of viral peptides to HLA-E, restoring HLA-E expression and inducing HLA-E-dependent NK cell immune tolerance to infected cells. Recognizes HLA-E in complex with human cytomegalovirus UL40-derived peptide (VMAPRTLIL) and inhibits NK cell cytotoxicity. (Microbial infection) May recognize HLA-E in complex with HIV-1 gag/Capsid protein p24-derived peptide (AISPRTLNA) on infected cells and may inhibit NK cell cytotoxicity, a mechanism that allows HIV-1 to escape immune recognition. In terms of biological role, (Microbial infection) Upon SARS-CoV-2 infection, may contribute to functional exhaustion of cytotoxic NK cells and CD8-positive T cells. On NK cells, may recognize HLA-E in complex with SARS-CoV-2 S/Spike protein S1-derived peptide (LQPRTFLL) expressed on the surface of lung epithelial cells, inducing NK cell exhaustion and dampening antiviral immune surveillance. The chain is Natural killer cells antigen CD94 (KLRD1) from Homo sapiens (Human).